Reading from the N-terminus, the 129-residue chain is uncharacterized protein (129 aa).

This sequence to M.pneumoniae MPN_376 N-terminal region.

This is an uncharacterized protein from Mycoplasma pneumoniae (strain ATCC 29342 / M129 / Subtype 1) (Mycoplasmoides pneumoniae).